The sequence spans 558 residues: Magnesium-chelatase 60 kDa subunit (558 aa).

Disordered stretches follow at residues 234–268 (MPAS…GEEM) and 298–325 (MARG…MGRL). Residues 240-254 (APPEPEPEPPEDQPD) are compositionally biased toward acidic residues. The span at 298-308 (MARGATGTGSA) shows a compositional bias: low complexity. The VWFA domain maps to 376–555 (VLIFAVDASG…HKLSNVLGAA (180 aa)).

It belongs to the Mg-chelatase subunits D/I family.

The catalysed reaction is protoporphyrin IX + Mg(2+) + ATP + H2O = Mg-protoporphyrin IX + ADP + phosphate + 3 H(+). It functions in the pathway porphyrin-containing compound metabolism; bacteriochlorophyll biosynthesis. Functionally, involved in bacteriochlorophyll biosynthesis; introduces a magnesium ion into protoporphyrin IX to yield Mg-protoporphyrin IX. This is Magnesium-chelatase 60 kDa subunit (bchD) from Cereibacter sphaeroides (strain ATCC 17023 / DSM 158 / JCM 6121 / CCUG 31486 / LMG 2827 / NBRC 12203 / NCIMB 8253 / ATH 2.4.1.) (Rhodobacter sphaeroides).